Reading from the N-terminus, the 343-residue chain is Galactoside alpha-(1,2)-fucosyltransferase 2 (343 aa).

Over 1 to 14 the chain is Cytoplasmic; it reads MLVVQMPFSFPMAH. A helical; Signal-anchor for type II membrane protein membrane pass occupies residues 15 to 28; the sequence is FILFVFTVSTIFHV. The Lumenal segment spans residues 29–343; the sequence is QQRLAKIQAM…AADLSPLLKH (315 aa). Residues Asn188, Asn282, and Asn308 are each glycosylated (N-linked (GlcNAc...) asparagine).

It belongs to the glycosyltransferase 11 family.

It localises to the golgi apparatus. It is found in the golgi stack membrane. The enzyme catalyses a beta-D-galactosyl-(1-&gt;3)-N-acetyl-beta-D-glucosaminyl derivative + GDP-beta-L-fucose = an alpha-L-Fuc-(1-&gt;2)-beta-D-Gal-(1-&gt;3)-beta-D-GlcNAc derivative + GDP + H(+). The catalysed reaction is a beta-D-galactosyl-(1-&gt;4)-N-acetyl-beta-D-glucosaminyl derivative + GDP-beta-L-fucose = an alpha-L-Fuc-(1-&gt;2)-beta-D-Gal-(1-&gt;4)-beta-D-GlcNAc derivative + GDP + H(+). It catalyses the reaction a neolactoside nLc4Cer + GDP-beta-L-fucose = a neolactoside IV(2)-alpha-Fuc-nLc4Cer + GDP + H(+). It carries out the reaction a neolactoside nLc4Cer(d18:1(4E)) + GDP-beta-L-fucose = a neolactoside IV(2)-alpha-Fuc-nLc4Cer(d18:1(4E)) + GDP + H(+). The enzyme catalyses a ganglioside GM1 + GDP-beta-L-fucose = a ganglioside Fuc-GM1 + GDP + H(+). The catalysed reaction is a ganglioside GA1 + GDP-beta-L-fucose = a ganglioside Fuc-GA1 + GDP + H(+). It catalyses the reaction Lc4Cer + GDP-beta-L-fucose = alpha-L-fucosyl-(1-&gt;2)-beta-D-galactosyl-(1-&gt;3)-N-acetyl-beta-D-glucosaminyl-(1-&gt;3)-beta-D-galactosyl-(1-&gt;4)-beta-D-glucosyl-(1&lt;-&gt;1')-ceramide + GDP + H(+). It carries out the reaction a beta-D-Gal-(1-&gt;3)-beta-D-GlcNAc-(1-&gt;3)-beta-D-Gal-(1-&gt;4)-beta-D-Glc-(1&lt;-&gt;1')-Cer(d18:1(4E)) + GDP-beta-L-fucose = alpha-L-fucosyl-(1-&gt;2)- beta-D-galactosyl-(1-&gt;3)-N-acetyl-beta-D-glucosaminyl-(1-&gt;3)-beta-D-galactosyl-(1-&gt;4)-beta-D-glucosyl-(1&lt;-&gt;1')-N-acylsphing-4-enine + GDP + H(+). The enzyme catalyses a ganglioside GD1b + GDP-beta-L-fucose = a ganglioside Fuc-GD1b + GDP + H(+). The catalysed reaction is a ganglioside GM1 (d18:1(4E)) + GDP-beta-L-fucose = a ganglioside Fuc-GM1 (d18:1(4E)) + GDP + H(+). It catalyses the reaction a globoside GalGb4Cer (d18:1(4E)) + GDP-beta-L-fucose = a globoside Globo-H (d18:1(4E)) + GDP + H(+). It carries out the reaction a lactoside III(4)-a-Fuc-Lc4Cer + GDP-beta-L-fucose = a lactoside IV(2),III(4)-a-[Fuc]2-Lc4Cer + GDP + H(+). The enzyme catalyses beta-D-galactosyl-(1-&gt;3)-N-acetyl-D-galactosamine + GDP-beta-L-fucose = alpha-L-fucosyl-(1-&gt;2)-beta-D-galactosyl-(1-&gt;3)-N-acetyl-D-galactosamine + GDP + H(+). It functions in the pathway protein modification; protein glycosylation. Its function is as follows. Catalyzes the transfer of L-fucose, from a guanosine diphosphate-beta-L-fucose, to the terminal galactose on both O- and N-linked glycans chains of cell surface glycoproteins and glycolipids and the resulting epitope regulates several processes such as cell-cell interaction including host-microbe interaction, cell surface expression and cell proliferation. Preferentially fucosylates gangliosides GA1 and GM1 in the antrum, cecum and colon and in the female reproductive organs. Fucosylated host glycoproteins or glycolipids mediate interaction with intestinal microbiota influencing its composition. Creates a soluble precursor oligosaccharide FuC-alpha ((1,2)Galbeta-) called the H antigen which is an essential substrate for the final step in the soluble ABO blood group antigen synthesis pathway. This is Galactoside alpha-(1,2)-fucosyltransferase 2 from Hylobates lar (Lar gibbon).